A 441-amino-acid chain; its full sequence is Methylenetetrahydrofolate--tRNA-(uracil-5-)-methyltransferase TrmFO (441 aa).

7–12 contacts FAD; the sequence is GAGLSG.

This sequence belongs to the MnmG family. TrmFO subfamily. The cofactor is FAD.

Its subcellular location is the cytoplasm. The enzyme catalyses uridine(54) in tRNA + (6R)-5,10-methylene-5,6,7,8-tetrahydrofolate + NADH + H(+) = 5-methyluridine(54) in tRNA + (6S)-5,6,7,8-tetrahydrofolate + NAD(+). It carries out the reaction uridine(54) in tRNA + (6R)-5,10-methylene-5,6,7,8-tetrahydrofolate + NADPH + H(+) = 5-methyluridine(54) in tRNA + (6S)-5,6,7,8-tetrahydrofolate + NADP(+). Catalyzes the folate-dependent formation of 5-methyl-uridine at position 54 (M-5-U54) in all tRNAs. This chain is Methylenetetrahydrofolate--tRNA-(uracil-5-)-methyltransferase TrmFO, found in Pseudothermotoga lettingae (strain ATCC BAA-301 / DSM 14385 / NBRC 107922 / TMO) (Thermotoga lettingae).